Here is a 340-residue protein sequence, read N- to C-terminus: Beta-D-galactofuranosidase xynD (340 aa).

The first 24 residues, 1–24 (MKHHNYYPSTCLSILPFLLPLTMS), serve as a signal peptide directing secretion. Asp-51 acts as the Proton acceptor in catalysis. Asn-96 and Asn-165 each carry an N-linked (GlcNAc...) asparagine glycan. Glu-222 acts as the Proton donor in catalysis. N-linked (GlcNAc...) asparagine glycans are attached at residues Asn-302 and Asn-328.

This sequence belongs to the glycosyl hydrolase 43 family.

The protein resides in the secreted. Its pathway is glycan degradation. In terms of biological role, glycoside hydrolase family 43 beta-D-galactofuranosidase involved in the degradation of beta-galactofuranoside (Galf)-containing glycans such as galactomannan or O-glycans. Is not active on beta-1,5- or beta-1,6-linked beta-D-galactofuranose (Galf) residues. This Aspergillus niger (strain ATCC MYA-4892 / CBS 513.88 / FGSC A1513) protein is Beta-D-galactofuranosidase xynD.